Consider the following 162-residue polypeptide: CASP-like protein 1C1 (162 aa).

The Cytoplasmic segment spans residues 1–7 (MAKLHRL). Residues 8–28 (ISAVLRLAAAGAAAAAAIIMV) traverse the membrane as a helical segment. Over 29–50 (TSHETTSFFGIEMEAKYSYTPS) the chain is Extracellular. Residues 51–71 (FVFFVVAFAVAFAYSLLALLA) traverse the membrane as a helical segment. The Cytoplasmic portion of the chain corresponds to 72–79 (RPGSTASR). Residues 80 to 100 (LLLLSDVMVGMLLTGAVAATG) form a helical membrane-spanning segment. Residues 101–128 (AISQVGKSGNEHAGWLPICAQVQAYCSH) are Extracellular-facing. The chain crosses the membrane as a helical span at residues 129 to 149 (VMGALIAGFVSLLLYFLIIMY). At 150–162 (SLHAVAEPLCSCH) the chain is on the cytoplasmic side.

The protein belongs to the Casparian strip membrane proteins (CASP) family. As to quaternary structure, homodimer and heterodimers.

The protein resides in the cell membrane. The polypeptide is CASP-like protein 1C1 (Sorghum bicolor (Sorghum)).